The sequence spans 364 residues: MQKNNRVVVGMSGGVDSSVAAYLLKEQGYEVIGVTMQIWQDKDEEAVRVEGGCCSLAAVNDARRVANKIGIKYYVMNFKDVFKEKVIDYFVDEYLRGRTPNPCIACNKYIKFEELLKRAWMIDAYYVATGHYAIKEYDEERGRYLLKKSVDTSKDQTYVLYNLTQTQLEHILFPLGKYKKDKVRELAKNLGLPVASKPDSQEICFVTDNDYGKFIRENAKEEIKPGEFRDTRGRFLGYHKGIIHYTIGQRKGLGISVGKPLYVVDIDAENNVVVLGYGDEVYGDELISYNNNFISIDKLEKEMRVKAKIRYTAKEQDAVIRPLEDGRVFVKFDNPQRAITPGQSVVFYDGDIVVGGGIIERKVR.

ATP is bound by residues 10–17 and Met36; that span reads GMSGGVDS. The active-site Nucleophile is Cys106. Cysteines 106 and 204 form a disulfide. Gly130 contacts ATP. Residues 154-156 are interaction with tRNA; it reads KDQ. Residue Cys204 is the Cysteine persulfide intermediate of the active site. The interval 310-311 is interaction with tRNA; that stretch reads RY.

This sequence belongs to the MnmA/TRMU family.

It is found in the cytoplasm. It carries out the reaction S-sulfanyl-L-cysteinyl-[protein] + uridine(34) in tRNA + AH2 + ATP = 2-thiouridine(34) in tRNA + L-cysteinyl-[protein] + A + AMP + diphosphate + H(+). Catalyzes the 2-thiolation of uridine at the wobble position (U34) of tRNA, leading to the formation of s(2)U34. In Caldanaerobacter subterraneus subsp. tengcongensis (strain DSM 15242 / JCM 11007 / NBRC 100824 / MB4) (Thermoanaerobacter tengcongensis), this protein is tRNA-specific 2-thiouridylase MnmA 2.